The sequence spans 525 residues: MNDFWQHCSALLERELTPQQYVTWIKPLAPVAFDASANTLSIAAPNRFKLDWVKSQFSGRISDLARDFWNAPIEVQFVLDPKAGMRSAAAHAAPAAQRAPLTPNGPAATVAAIAANLAANAGAAPSAPADVPMTASAAAAHHLNADDADIDLPSLPAHEAAAGRRTWRPGPGAAPANGGEADSMYERSKLNPVLTFDNFVTGKANQLARAAAIQVADNPGISYNPLFLYGGVGLGKTHLIHAIGNQLLLDKAGARIRYIHAEQYVSDVVKAYQRKAFDDFKRYYHSLDLLLIDDIQFFSGKSRTQEEFFYAFEALVANKAQVIITSDTYPKEISGIDDRLISRFDSGLTVAIEPPELEMRVAILMRKAQSEGVNLSEDVAFFVAKHLRSNVRELEGALRKILAYSKFHGREISIELTKEALKDLLTVQNRQISVENIQKTVADFYNIKVADMYSKKRPANIARPRQIAMYLAKELTQKSLPEIGELFGGRDHTTVLHAVRKIADERSKDAQLNHELHVLEQTLKG.

The segment at 1–71 is domain I, interacts with DnaA modulators; sequence MNDFWQHCSA…SDLARDFWNA (71 aa). The domain II stretch occupies residues 71–188; that stretch reads APIEVQFVLD…GEADSMYERS (118 aa). The interval 160–182 is disordered; that stretch reads AAAGRRTWRPGPGAAPANGGEAD. Residues 169–181 show a composition bias toward low complexity; that stretch reads PGPGAAPANGGEA. The domain III, AAA+ region stretch occupies residues 189–405; the sequence is KLNPVLTFDN…GALRKILAYS (217 aa). Residues G233, G235, K236, and T237 each coordinate ATP. The segment at 406 to 525 is domain IV, binds dsDNA; the sequence is KFHGREISIE…LHVLEQTLKG (120 aa).

It belongs to the DnaA family. In terms of assembly, oligomerizes as a right-handed, spiral filament on DNA at oriC.

The protein localises to the cytoplasm. Plays an essential role in the initiation and regulation of chromosomal replication. ATP-DnaA binds to the origin of replication (oriC) to initiate formation of the DNA replication initiation complex once per cell cycle. Binds the DnaA box (a 9 base pair repeat at the origin) and separates the double-stranded (ds)DNA. Forms a right-handed helical filament on oriC DNA; dsDNA binds to the exterior of the filament while single-stranded (ss)DNA is stabiized in the filament's interior. The ATP-DnaA-oriC complex binds and stabilizes one strand of the AT-rich DNA unwinding element (DUE), permitting loading of DNA polymerase. After initiation quickly degrades to an ADP-DnaA complex that is not apt for DNA replication. Binds acidic phospholipids. The sequence is that of Chromosomal replication initiator protein DnaA from Burkholderia ambifaria (strain ATCC BAA-244 / DSM 16087 / CCUG 44356 / LMG 19182 / AMMD) (Burkholderia cepacia (strain AMMD)).